The sequence spans 133 residues: Putative nickel-responsive regulator (133 aa).

Ni(2+) contacts are provided by His-74, His-85, His-87, and Cys-93.

The protein belongs to the transcriptional regulatory CopG/NikR family. Ni(2+) serves as cofactor.

In terms of biological role, transcriptional regulator. The chain is Putative nickel-responsive regulator from Saccharolobus solfataricus (strain ATCC 35092 / DSM 1617 / JCM 11322 / P2) (Sulfolobus solfataricus).